A 320-amino-acid polypeptide reads, in one-letter code: Lipoyl synthase (320 aa).

[4Fe-4S] cluster contacts are provided by C67, C72, C78, C93, C97, C100, and S307. Positions F79–E296 constitute a Radical SAM core domain.

It belongs to the radical SAM superfamily. Lipoyl synthase family. The cofactor is [4Fe-4S] cluster.

Its subcellular location is the cytoplasm. The enzyme catalyses [[Fe-S] cluster scaffold protein carrying a second [4Fe-4S](2+) cluster] + N(6)-octanoyl-L-lysyl-[protein] + 2 oxidized [2Fe-2S]-[ferredoxin] + 2 S-adenosyl-L-methionine + 4 H(+) = [[Fe-S] cluster scaffold protein] + N(6)-[(R)-dihydrolipoyl]-L-lysyl-[protein] + 4 Fe(3+) + 2 hydrogen sulfide + 2 5'-deoxyadenosine + 2 L-methionine + 2 reduced [2Fe-2S]-[ferredoxin]. The protein operates within protein modification; protein lipoylation via endogenous pathway; protein N(6)-(lipoyl)lysine from octanoyl-[acyl-carrier-protein]: step 2/2. In terms of biological role, catalyzes the radical-mediated insertion of two sulfur atoms into the C-6 and C-8 positions of the octanoyl moiety bound to the lipoyl domains of lipoate-dependent enzymes, thereby converting the octanoylated domains into lipoylated derivatives. This chain is Lipoyl synthase, found in Haemophilus influenzae (strain 86-028NP).